The chain runs to 439 residues: GTPase Der (439 aa).

EngA-type G domains are found at residues 4–169 and 177–352; these read AMVS…PQEE and IKIA…EEYN. GTP contacts are provided by residues 10 to 17, 57 to 61, 120 to 123, 183 to 190, 230 to 234, and 295 to 298; these read GRPNVGKS, DTGGL, NKVD, GKPNVGKS, DTAGI, and NKWD. Residues 353 to 437 enclose the KH-like domain; it reads KRITTGLLNN…PVVISTRKRG (85 aa).

This sequence belongs to the TRAFAC class TrmE-Era-EngA-EngB-Septin-like GTPase superfamily. EngA (Der) GTPase family. Associates with the 50S ribosomal subunit.

In terms of biological role, GTPase that plays an essential role in the late steps of ribosome biogenesis. In Thermoanaerobacter pseudethanolicus (strain ATCC 33223 / 39E) (Clostridium thermohydrosulfuricum), this protein is GTPase Der.